Here is a 128-residue protein sequence, read N- to C-terminus: Large ribosomal subunit protein bL12 (128 aa).

It belongs to the bacterial ribosomal protein bL12 family. In terms of assembly, homodimer. Part of the ribosomal stalk of the 50S ribosomal subunit. Forms a multimeric L10(L12)X complex, where L10 forms an elongated spine to which 2 to 4 L12 dimers bind in a sequential fashion. Binds GTP-bound translation factors.

Functionally, forms part of the ribosomal stalk which helps the ribosome interact with GTP-bound translation factors. Is thus essential for accurate translation. The polypeptide is Large ribosomal subunit protein bL12 (Saccharopolyspora erythraea (strain ATCC 11635 / DSM 40517 / JCM 4748 / NBRC 13426 / NCIMB 8594 / NRRL 2338)).